Consider the following 392-residue polypeptide: Cyclic AMP receptor 1 (392 aa).

Topologically, residues 1–13 (MGLLDGNPANETS) are extracellular. Asn10 carries an N-linked (GlcNAc...) asparagine glycan. The helical transmembrane segment at 14–33 (LVLLLFADFSSMLGCMAVLI) threads the bilayer. The Cytoplasmic segment spans residues 34–47 (GFWRLKLLRNHVTK). Residues 48–68 (VIACFCATSFCKDFPSTILTL) form a helical membrane-spanning segment. Over 69–83 (TNTAVNGGFPCYLYA) the chain is Extracellular. The chain crosses the membrane as a helical span at residues 84–109 (IVITYGSFACWLWTLCLAISIYMLIV). Residues 110–120 (KREPEPERFEK) are Cytoplasmic-facing. A helical membrane pass occupies residues 121–139 (YYYLLCWGLPLISTIVMLA). At 140 to 162 (KNTVQFVGNWCWIGVSFTGYRFG) the chain is on the extracellular side. The chain crosses the membrane as a helical span at residues 163-181 (LFYGPFLFIWAISAVLVGL). The Cytoplasmic segment spans residues 182 to 205 (TSRYTYVVIHNGVSDNKEKHLTYQ). The chain crosses the membrane as a helical span at residues 206 to 224 (FKLINYIIVFLVCWVFAVV). Over 225 to 235 (NRIVNGLNMFP) the chain is Extracellular. A helical transmembrane segment spans residues 236 to 260 (PALNILHTYLSVSHGFWASVTFIYN). The Cytoplasmic portion of the chain corresponds to 261–392 (NPLMWRYFGA…STSTNGQGNN (132 aa)). 2 disordered regions span residues 292 to 324 (NKNN…VQCS) and 339 to 392 (VNNQ…QGNN). Over residues 298 to 310 (PSPYSSSRGTSGK) the composition is skewed to polar residues. Phosphoserine is present on residues Ser299, Ser302, Ser303, Ser304, Ser308, Ser360, Ser361, Ser362, Ser363, Ser364, Ser366, Ser367, and Ser368. The segment covering 340–367 (NNQQNLNNNYGLQQNYNDEGSSSSSLSS) has biased composition (low complexity). The span at 375-392 (VEMQNIQISTSTNGQGNN) shows a compositional bias: polar residues.

The protein belongs to the G-protein coupled receptor 5 family. Post-translationally, C-terminal Ser or Thr residues may be phosphorylated.

It localises to the membrane. Functionally, receptor for cAMP. Coordinates the aggregation of individual cells into a multicellular organism and regulates the expression of a large number of developmentally regulated genes. The activity of this receptor is mediated by G proteins. The polypeptide is Cyclic AMP receptor 1 (carA-1) (Dictyostelium discoideum (Social amoeba)).